We begin with the raw amino-acid sequence, 189 residues long: DFLFARTMIGVFKNIEYMCSRTNSKTWGKEAWKKIVVCVVSDGRAKINPRTRAVLAGLGVYQDGIAKQQVNGKDVTAHIYEYTTQIGMELKGNQVHLKPRSGVPVQMIFCLKEKNQKKINSHRWFFQAFGRVLDPNICVLLDAGTKPGRDSIYHLWRAFDLQPMCGGACGEIKAMLSHGKKLINPLIXA.

The protein belongs to the chitin synthase family. Class I subfamily.

It localises to the cell membrane. It carries out the reaction [(1-&gt;4)-N-acetyl-beta-D-glucosaminyl](n) + UDP-N-acetyl-alpha-D-glucosamine = [(1-&gt;4)-N-acetyl-beta-D-glucosaminyl](n+1) + UDP + H(+). In terms of biological role, polymerizes chitin, a structural polymer of the cell wall and septum, by transferring the sugar moiety of UDP-GlcNAc to the non-reducing end of the growing chitin polymer. This is Chitin synthase 1 (CHS1) from Ajellomyces capsulatus (Darling's disease fungus).